A 96-amino-acid chain; its full sequence is Small ribosomal subunit protein bS6 (96 aa).

Belongs to the bacterial ribosomal protein bS6 family.

In terms of biological role, binds together with bS18 to 16S ribosomal RNA. This chain is Small ribosomal subunit protein bS6, found in Beutenbergia cavernae (strain ATCC BAA-8 / DSM 12333 / CCUG 43141 / JCM 11478 / NBRC 16432 / NCIMB 13614 / HKI 0122).